The chain runs to 205 residues: Ras-related protein Rab-4 (205 aa).

Position 14–22 (14–22 (GSQSVGKSC)) interacts with GTP. Residues 36 to 44 (STHTIGVDF) carry the Effector region motif. GTP is bound by residues 62–66 (DTAGQ), 120–123 (NKAD), and 150–152 (SAL). 2 S-geranylgeranyl cysteine lipidation sites follow: Cys-203 and Cys-205. Position 205 is a cysteine methyl ester (Cys-205).

The protein belongs to the small GTPase superfamily. Rab family.

The protein resides in the cell membrane. Its function is as follows. Protein transport. Probably involved in vesicular traffic. This chain is Ras-related protein Rab-4 (rab4), found in Dictyostelium discoideum (Social amoeba).